Here is a 200-residue protein sequence, read N- to C-terminus: MKRYGIIGGTFDPIHYGHLYIAYEAKKQLSLDKIIFMPAGNPPHKEGKKITSAKLRYEMVKSSIKDFSGFSISKYEIEKKGFSYTYETLEHFKNNDVELFFITGADCLMDIEKWESSDKILSLSNLVVFSRGGFSNKELIKQKEYIEKKYHVSIILLTLKRLEISSTDIRERIKNKERVDFFVPQPIIKLIEENNLYKEE.

Belongs to the NadD family.

It catalyses the reaction nicotinate beta-D-ribonucleotide + ATP + H(+) = deamido-NAD(+) + diphosphate. The protein operates within cofactor biosynthesis; NAD(+) biosynthesis; deamido-NAD(+) from nicotinate D-ribonucleotide: step 1/1. Catalyzes the reversible adenylation of nicotinate mononucleotide (NaMN) to nicotinic acid adenine dinucleotide (NaAD). The protein is Probable nicotinate-nucleotide adenylyltransferase of Clostridium botulinum (strain Alaska E43 / Type E3).